The sequence spans 156 residues: Transcription elongation factor GreA (156 aa).

Positions 6-75 (IYLTKEGYEK…ELENMLSKAE (70 aa)) form a coiled coil.

The protein belongs to the GreA/GreB family.

Necessary for efficient RNA polymerase transcription elongation past template-encoded arresting sites. The arresting sites in DNA have the property of trapping a certain fraction of elongating RNA polymerases that pass through, resulting in locked ternary complexes. Cleavage of the nascent transcript by cleavage factors such as GreA or GreB allows the resumption of elongation from the new 3'terminus. GreA releases sequences of 2 to 3 nucleotides. This Thermosipho africanus (strain TCF52B) protein is Transcription elongation factor GreA.